The chain runs to 917 residues: DNA mismatch repair protein spellchecker 1 (917 aa).

667 to 674 (GPNMGGKS) is an ATP binding site.

Belongs to the DNA mismatch repair MutS family. Heterodimer of Msh2/Spel and Msh6.

The protein resides in the nucleus. Functionally, involved in postreplication mismatch repair. Binds specifically to DNA containing mismatched nucleotides thus providing a target for the excision repair processes characteristic of postreplication mismatch repair. The protein is DNA mismatch repair protein spellchecker 1 (spel1) of Drosophila melanogaster (Fruit fly).